The chain runs to 312 residues: Small ribosomal subunit protein uS2 (312 aa).

Belongs to the universal ribosomal protein uS2 family. In terms of assembly, component of the small ribosomal subunit. Mature ribosomes consist of a small (40S) and a large (60S) subunit. The 40S subunit contains about 33 different proteins and 1 molecule of RNA (18S). The 60S subunit contains about 49 different proteins and 3 molecules of RNA (25S, 5.8S and 5S). Interacts with ribosomal protein S21.

Its subcellular location is the cytoplasm. Functionally, required for the assembly and/or stability of the 40S ribosomal subunit. Required for the processing of the 20S rRNA-precursor to mature 18S rRNA in a late step of the maturation of 40S ribosomal subunits. This chain is Small ribosomal subunit protein uS2, found in Vitis vinifera (Grape).